The primary structure comprises 103 residues: Iron-sulfur cluster assembly protein CyaY (103 aa).

Belongs to the frataxin family.

Its function is as follows. Involved in iron-sulfur (Fe-S) cluster assembly. May act as a regulator of Fe-S biogenesis. This is Iron-sulfur cluster assembly protein CyaY from Rickettsia africae (strain ESF-5).